The following is an 874-amino-acid chain: Coatomer subunit gamma-1 (874 aa).

The span at 1–11 (MLKKFDKKDEE) shows a compositional bias: basic and acidic residues. Residues 1–21 (MLKKFDKKDEESGGGSNPFQH) form a disordered region. HEAT repeat units follow at residues 64–101 (TEATEAFFAMTKLFQSNDPTLRRMCYLTIKEMSCIAED), 283–320 (KELAPAVSVLQLFCSSPKAALRYAAVRTLNKVAMKHPS), 322–355 (VTACNLDLENLVTDANRSIATLAITTLLKTGSEG), and 356–392 (SIDRLMKQISSFMSEISDEFKVVVVQAISALCQKYPR). T594 carries the phosphothreonine modification. Positions 609 to 874 (RQEIFQEQLA…PVDIVLASVG (266 aa)) are interaction with ZNF289/ARFGAP2.

Belongs to the COPG family. As to quaternary structure, oligomeric complex that consists of at least the alpha, beta, beta', gamma, delta, epsilon and zeta subunits. Interacts with ZNF289/ARFGAP2 through its C-terminal appendage domain. Interacts with EGFR upon EGF treatment; interaction is essential for regulation of EGF-dependent nuclear transport of EGFR by retrograde trafficking from the Golgi to the ER. The coatomer interacts with KDEL receptors; the interaction is important for retrograde trafficking of KDEL-bearing proteins from the Golgi to the endoplasmic reticulum. Interacts with COPB1. Interacts with TMED10 (via C-terminus). Interacts with TMED2, TMED3, TMED7 and TMED9.

The protein localises to the cytoplasm. The protein resides in the cytosol. It localises to the golgi apparatus membrane. It is found in the cytoplasmic vesicle. Its subcellular location is the COPI-coated vesicle membrane. Functionally, the coatomer is a cytosolic protein complex that binds to dilysine motifs and reversibly associates with Golgi non-clathrin-coated vesicles, which further mediate biosynthetic protein transport from the ER, via the Golgi up to the trans Golgi network. Coatomer complex is required for budding from Golgi membranes, and is essential for the retrograde Golgi-to-ER transport of dilysine-tagged proteins. In mammals, the coatomer can only be recruited by membranes associated to ADP-ribosylation factors (ARFs), which are small GTP-binding proteins; the complex also influences the Golgi structural integrity, as well as the processing, activity, and endocytic recycling of LDL receptors. Required for limiting lipid storage in lipid droplets. Involved in lipid homeostasis by regulating the presence of perilipin family members PLIN2 and PLIN3 at the lipid droplet surface and promoting the association of adipocyte triglyceride lipase (PNPLA2) with the lipid droplet surface to mediate lipolysis. The polypeptide is Coatomer subunit gamma-1 (COPG1) (Bos taurus (Bovine)).